A 501-amino-acid chain; its full sequence is Aspartate--tRNA ligase, cytoplasmic (501 aa).

Phosphothreonine is present on T52. N6-acetyllysine is present on K74. L-aspartate is bound at residue E229. Position 249 is a phosphoserine (S249). The aspartate stretch occupies residues 251–254; that stretch reads QLYK. Residue R273 coordinates L-aspartate. ATP contacts are provided by residues 273-275 and 281-283; these read RAE and RHL. An N6-acetyllysine modification is found at K374. The tract at residues 411–415 is binding site for the 3'-end of tRNA; sequence KQSNS. Residue E424 coordinates ATP. L-aspartate-binding residues include S427 and R431. ATP is bound at residue 472–475; sequence GLER. T500 is subject to Phosphothreonine; by PKA.

This sequence belongs to the class-II aminoacyl-tRNA synthetase family. Type 2 subfamily. In terms of assembly, homodimer. Part of a multisubunit complex that groups tRNA ligases for Arg (RARS1), Asp (DARS1), Gln (QARS1), Ile (IARS1), Leu (LARS1), Lys (KARS1), Met (MARS1) the bifunctional ligase for Glu and Pro (EPRS1) and the auxiliary subunits AIMP1/p43, AIMP2/p38 and EEF1E1/p18.

The protein resides in the cytoplasm. The enzyme catalyses tRNA(Asp) + L-aspartate + ATP = L-aspartyl-tRNA(Asp) + AMP + diphosphate. Its function is as follows. Catalyzes the specific attachment of an amino acid to its cognate tRNA in a 2 step reaction: the amino acid (AA) is first activated by ATP to form AA-AMP and then transferred to the acceptor end of the tRNA. The sequence is that of Aspartate--tRNA ligase, cytoplasmic (DARS1) from Bos taurus (Bovine).